An 850-amino-acid chain; its full sequence is Translation initiation factor IF-2 (850 aa).

Disordered stretches follow at residues 50-72 and 92-267; these read LKSSHKSKAEEPRKITLQRKTTS and FVQR…TGPV. The span at 96 to 135 shows a compositional bias: basic and acidic residues; the sequence is SPEEIQAEQKREQEERRAAENAAREKADADARQRNEEQAR. The segment covering 136 to 172 has biased composition (low complexity); it reads RQAAQAPAAAPVAKAEPAPAAAAPAAPAVPDAPVSED. 2 stretches are compositionally biased toward basic and acidic residues: residues 173–210 and 234–243; these read AAARAAERKKDEARRNESRTRDDDRRGGGVAGERRGEA and TTDEESDGFR. The span at 244–257 shows a compositional bias: basic residues; the sequence is RGRGGKGKPKKRNQ. One can recognise a tr-type G domain in the interval 350 to 517; that stretch reads SRAPVVTVMG…AVLLQAEILE (168 aa). A G1 region spans residues 359–366; the sequence is GHVDHGKT. 359-366 is a binding site for GTP; it reads GHVDHGKT. A G2 region spans residues 384–388; that stretch reads GITQH. The tract at residues 405–408 is G3; sequence DTPG. GTP is bound by residues 405–409 and 459–462; these read DTPGH and NKID. Residues 459–462 are G4; it reads NKID. The G5 stretch occupies residues 495 to 497; that stretch reads SAK.

It belongs to the TRAFAC class translation factor GTPase superfamily. Classic translation factor GTPase family. IF-2 subfamily.

It is found in the cytoplasm. Functionally, one of the essential components for the initiation of protein synthesis. Protects formylmethionyl-tRNA from spontaneous hydrolysis and promotes its binding to the 30S ribosomal subunits. Also involved in the hydrolysis of GTP during the formation of the 70S ribosomal complex. This chain is Translation initiation factor IF-2, found in Pseudomonas entomophila (strain L48).